The sequence spans 127 residues: MSELVEHIQVHVEPEYQAGESAPGDQRYVFSYTITVHNRSAHSIQLLARHWKITQSSGKVQEVRGKGVIGQQPLIGPGQQFRYTSRAVLDGPVGVMEGSYTCLDTTEQRAFEVPIAAFRLAGPNQVH.

The ApaG domain maps to 2–127; sequence SELVEHIQVH…FRLAGPNQVH (126 aa).

This chain is Protein ApaG, found in Chromohalobacter salexigens (strain ATCC BAA-138 / DSM 3043 / CIP 106854 / NCIMB 13768 / 1H11).